The chain runs to 145 residues: Putative pre-16S rRNA nuclease (145 aa).

It belongs to the YqgF nuclease family.

It localises to the cytoplasm. Could be a nuclease involved in processing of the 5'-end of pre-16S rRNA. This chain is Putative pre-16S rRNA nuclease, found in Levilactobacillus brevis (strain ATCC 367 / BCRC 12310 / CIP 105137 / JCM 1170 / LMG 11437 / NCIMB 947 / NCTC 947) (Lactobacillus brevis).